The sequence spans 315 residues: 31 kDa ribonucleoprotein, chloroplastic (315 aa).

Residues 1–71 (MSCATKPIIK…LSPKKKTSVS (71 aa)) constitute a chloroplast transit peptide. A disordered region spans residues 114 to 133 (AGESDEVEADEEEEEFQEPP). The segment covering 115 to 133 (GESDEVEADEEEEEFQEPP) has biased composition (acidic residues). 2 RRM domains span residues 136–214 (AKLF…KAAR) and 230–308 (YRIY…VAED).

It localises to the plastid. It is found in the chloroplast. Functionally, could be involved in splicing and/or processing of chloroplast RNA's. This chain is 31 kDa ribonucleoprotein, chloroplastic, found in Nicotiana sylvestris (Wood tobacco).